The primary structure comprises 190 residues: Heme-binding protein 1 (190 aa).

It belongs to the HEBP family. As to quaternary structure, monomer.

The protein localises to the cytoplasm. May bind free porphyrinogens that may be present in the cell and thus facilitate removal of these potentially toxic compound. Binds with a high affinity to one molecule of heme or porphyrins. It binds metalloporphyrins, free porphyrins and N-methylprotoporphyrin with similar affinities. The protein is Heme-binding protein 1 (hebp1) of Xenopus laevis (African clawed frog).